The chain runs to 871 residues: Dual O-methyltransferase/FAD-dependent monooxygenase CTB3 (871 aa).

Residues 1–429 (MMQFQRDLEA…GLLTVRSAGQ (429 aa)) are O-methyltransferase. D279 contributes to the S-adenosyl-L-methionine binding site. H331 acts as the Proton acceptor in catalysis. Residues 430–871 (TALSGTNTLT…NLVDCSEFVF (442 aa)) form an FAD-dependent monooxygenase region. FAD-binding residues include E485, R569, D793, and A806.

The protein in the C-terminal section; belongs to the paxM FAD-dependent monooxygenase family. In the N-terminal section; belongs to the class I-like SAM-binding methyltransferase superfamily. Cation-independent O-methyltransferase family. COMT subfamily.

The enzyme catalyses nor-toralactone + S-adenosyl-L-methionine = toralactone + S-adenosyl-L-homocysteine + H(+). It catalyses the reaction toralactone + NADH + O2 + H(+) = 1-(3,4,5-trihydroxy-7-methoxynaphthalen-2-yl)propan-2-one + CO2 + NAD(+). The protein operates within mycotoxin biosynthesis. In terms of biological role, dual O-methyltransferase/FAD-dependent monooxygenase; part of the gene cluster that mediates the biosynthesis of cercosporin, a light-activated, non-host-selective toxin. The perylenequinone chromophore of cercosporin absorbs light energy to attain an electronically-activated triplet state and produces active oxygen species such as the hydroxyl radical, superoxide, hydrogen peroxide or singlet oxygen upon reaction with oxygen molecules. These reactive oxygen species cause damage to various cellular components including lipids, proteins and nucleic acids. The first step of cercosporin biosynthesis is performed by the polyketide synthase CTB1 which catalyzes the formation of nor-toralactone. The starter unit acyltransferase (SAT) domain of CTB1 initiates polyketide extension by the selective utilization of acetyl-CoA, which is elongated to the heptaketide in the beta-ketoacyl synthase (KS) domain by successive condensations with six malonyl units introduced by the malonyl acyltransferase (MAT) domain. The product template (PT) domain catalyzes C4-C9 and C2-C11 aldol cyclizations and dehydrations to a trihydroxynaphthalene, which is thought to be delivered to the thioesterase (TE) domain for product release. The bifunctional enzyme CTB3 then methylates nor-toralactone to toralactone before conducting an unusual oxidative aromatic ring opening. The O-methyltransferase CTB2 further methylates the nascent OH-6 of the CBT3 product, blocking further oxidation at this site before the reductase CTB6 reduces the 2-oxopropyl ketone at position C7, giving naphthalene. The FAD-dependent monooxygenase CTB5 in concert with the multicopper oxidase CTB12 are responsible for homodimerization of naphthalene with CTB7 installing the dioxepine moiety, finally producing cercosporin. The fasciclin domain-containing protein CTB11 might act with CTB5 and CTB12 whereas the roles of CTB9 and CTB10 have still to be elucidated. In Cercospora beticola (Sugarbeet leaf spot fungus), this protein is Dual O-methyltransferase/FAD-dependent monooxygenase CTB3.